A 157-amino-acid chain; its full sequence is 2-C-methyl-D-erythritol 2,4-cyclodiphosphate synthase (157 aa).

A divalent metal cation contacts are provided by aspartate 8 and histidine 10. Residues 8–10 (DVH) and 34–35 (HS) each bind 4-CDP-2-C-methyl-D-erythritol 2-phosphate. Residue histidine 42 coordinates a divalent metal cation. 4-CDP-2-C-methyl-D-erythritol 2-phosphate is bound by residues 56–58 (DIG), 61–65 (FPDTD), 100–106 (AQAPKMA), 132–135 (TTTE), phenylalanine 139, and arginine 142.

This sequence belongs to the IspF family. Homotrimer. The cofactor is a divalent metal cation.

It carries out the reaction 4-CDP-2-C-methyl-D-erythritol 2-phosphate = 2-C-methyl-D-erythritol 2,4-cyclic diphosphate + CMP. It functions in the pathway isoprenoid biosynthesis; isopentenyl diphosphate biosynthesis via DXP pathway; isopentenyl diphosphate from 1-deoxy-D-xylulose 5-phosphate: step 4/6. Its function is as follows. Involved in the biosynthesis of isopentenyl diphosphate (IPP) and dimethylallyl diphosphate (DMAPP), two major building blocks of isoprenoid compounds. Catalyzes the conversion of 4-diphosphocytidyl-2-C-methyl-D-erythritol 2-phosphate (CDP-ME2P) to 2-C-methyl-D-erythritol 2,4-cyclodiphosphate (ME-CPP) with a corresponding release of cytidine 5-monophosphate (CMP). This chain is 2-C-methyl-D-erythritol 2,4-cyclodiphosphate synthase, found in Pseudomonas paraeruginosa (strain DSM 24068 / PA7) (Pseudomonas aeruginosa (strain PA7)).